We begin with the raw amino-acid sequence, 188 residues long: CASP-like protein 4B1 (188 aa).

A disordered region spans residues 1-34 (MTNPDNMKPVEATDVESAAEKTSEPTPASGTSTI). The Cytoplasmic segment spans residues 1-46 (MTNPDNMKPVEATDVESAAEKTSEPTPASGTSTITQRWKREDLIKK). Residues 24–34 (EPTPASGTSTI) are compositionally biased toward polar residues. Residues 47–67 (ASPITRGICLLFSLIAFLIMV) traverse the membrane as a helical segment. Topologically, residues 68–84 (SNKHGYGRNFNDYEEYR) are extracellular. The chain crosses the membrane as a helical span at residues 85-105 (YVLAISIISTLYTAWQTFAHF). At 106–124 (SKREIFDRRTSILVDFSGD) the chain is on the cytoplasmic side. The chain crosses the membrane as a helical span at residues 125–145 (QIVAYLLISAASSAIPLTNIF). At 146–156 (REGQDNIFTDS) the chain is on the extracellular side. The helical transmembrane segment at 157–177 (AASAISMAIFAFIALALSALF) threads the bilayer. Over 178 to 188 (SGYKLSTHSFI) the chain is Cytoplasmic.

The protein belongs to the Casparian strip membrane proteins (CASP) family. Homodimer and heterodimers.

It is found in the cell membrane. The chain is CASP-like protein 4B1 from Arabidopsis thaliana (Mouse-ear cress).